Here is a 245-residue protein sequence, read N- to C-terminus: Phosducin (245 aa).

The interval Met-1–Arg-70 is disordered. The Phosducin domain occupies Met-1–Met-244. Composition is skewed to basic and acidic residues over residues Asp-28–Leu-50 and Ser-58–Ser-69. Ser-73 is modified (phosphoserine; by PKA). The interval Tyr-111–Glu-245 is thioredoxin fold.

This sequence belongs to the phosducin family. In terms of assembly, interacts with CRX. Forms a complex with the beta and gamma subunits of the GTP-binding protein, transducin. In terms of processing, light-induced changes in cyclic nucleotide levels modulate the phosphorylation of this protein by cAMP kinase.

It localises to the cytoplasm. Its subcellular location is the cytosol. It is found in the nucleus. The protein resides in the cell projection. The protein localises to the cilium. It localises to the photoreceptor outer segment. Its subcellular location is the photoreceptor inner segment. Inhibits the transcriptional activation activity of the cone-rod homeobox CRX. May participate in the regulation of visual phototransduction or in the integration of photoreceptor metabolism. The chain is Phosducin (PDC) from Bos taurus (Bovine).